The sequence spans 141 residues: Nucleoside diphosphate kinase (141 aa).

6 residues coordinate ATP: lysine 11, phenylalanine 59, arginine 87, threonine 93, arginine 104, and asparagine 114. Histidine 117 acts as the Pros-phosphohistidine intermediate in catalysis.

This sequence belongs to the NDK family. In terms of assembly, homotetramer. The cofactor is Mg(2+).

Its subcellular location is the cytoplasm. It catalyses the reaction a 2'-deoxyribonucleoside 5'-diphosphate + ATP = a 2'-deoxyribonucleoside 5'-triphosphate + ADP. It carries out the reaction a ribonucleoside 5'-diphosphate + ATP = a ribonucleoside 5'-triphosphate + ADP. Major role in the synthesis of nucleoside triphosphates other than ATP. The ATP gamma phosphate is transferred to the NDP beta phosphate via a ping-pong mechanism, using a phosphorylated active-site intermediate. This Pseudomonas fluorescens (strain Pf0-1) protein is Nucleoside diphosphate kinase.